The sequence spans 349 residues: 5-deoxyribose 1-phosphate isomerase (349 aa).

Substrate contacts are provided by residues 49-51 (RGA), Arg92, and Gln199. Residue Asp240 is the Proton donor of the active site. A substrate-binding site is contributed by 250 to 251 (NK).

Belongs to the EIF-2B alpha/beta/delta subunits family. DrdI subfamily.

The catalysed reaction is 5-deoxy-alpha-D-ribose 1-phosphate = 5-deoxy-D-ribulose 1-phosphate. Its pathway is carbohydrate degradation. Functionally, catalyzes the isomerization of 5-deoxy-alpha-D-ribose 1-phosphate to 5-deoxy-D-ribulose 1-phosphate, as part of a 5-deoxyribose salvage pathway that recycles this toxic radical SAM enzyme by-product to mainstream metabolites. This Clostridium botulinum (strain Okra / Type B1) protein is 5-deoxyribose 1-phosphate isomerase.